A 507-amino-acid polypeptide reads, in one-letter code: ATP synthase subunit beta (507 aa).

The disordered stretch occupies residues Met-1–Asn-22. Gly-183–Thr-190 lines the ATP pocket.

The protein belongs to the ATPase alpha/beta chains family. F-type ATPases have 2 components, CF(1) - the catalytic core - and CF(0) - the membrane proton channel. CF(1) has five subunits: alpha(3), beta(3), gamma(1), delta(1), epsilon(1). CF(0) has three main subunits: a(1), b(2) and c(9-12). The alpha and beta chains form an alternating ring which encloses part of the gamma chain. CF(1) is attached to CF(0) by a central stalk formed by the gamma and epsilon chains, while a peripheral stalk is formed by the delta and b chains.

Its subcellular location is the cell inner membrane. It carries out the reaction ATP + H2O + 4 H(+)(in) = ADP + phosphate + 5 H(+)(out). Produces ATP from ADP in the presence of a proton gradient across the membrane. The catalytic sites are hosted primarily by the beta subunits. The sequence is that of ATP synthase subunit beta from Ehrlichia canis (strain Jake).